The primary structure comprises 21 residues: Snake venom serine protease jerdonase (21 aa).

The Peptidase S1 domain occupies 1 to 21; it reads IIGGDECNINEHPFLVALYDA.

The protein belongs to the peptidase S1 family. Snake venom subfamily. In terms of assembly, monomer. Glycosylated; contains 35.8% neutral carbohydrate. Expressed by the venom gland.

It localises to the secreted. With respect to regulation, inhibited by PMSF and soybean trypsin inhibitor. Partially inhibited by L-cysteine and DTT. Not affected by EDTA. Its function is as follows. Multifunctional venom serine protease that has fibrino(geno)lytic activity towards the A alpha-chain of human fibrinogen (FGA) and a slow activity towards the B beta-chain (FGB). Also hydrolyzes bovine low-molecular-mass kininogen and releases bradykinin. Catalyzes the hydrolysis of BAEE, S-2238 and S-2302. This is Snake venom serine protease jerdonase from Protobothrops jerdonii (Jerdon's pitviper).